The chain runs to 378 residues: Cytochrome b (378 aa).

Helical transmembrane passes span 34–54 (FGSL…FLAM), 78–99 (WLLR…YLHV), 114–134 (WLIG…GYVL), and 179–199 (FFTF…IHLL). Heme b-binding residues include His84 and His98. 2 residues coordinate heme b: His183 and His197. An a ubiquinone-binding site is contributed by His202. A run of 4 helical transmembrane segments spans residues 227–247 (FKDI…VLIS), 289–309 (LGGV…PFYN), 321–341 (INQV…WIGA), and 348–368 (YVLI…VNPL).

This sequence belongs to the cytochrome b family. The main subunits of complex b-c1 are: cytochrome b, cytochrome c1 and the Rieske protein. Heme b serves as cofactor.

The protein localises to the mitochondrion inner membrane. Component of the ubiquinol-cytochrome c reductase complex (complex III or cytochrome b-c1 complex) that is part of the mitochondrial respiratory chain. The b-c1 complex mediates electron transfer from ubiquinol to cytochrome c. Contributes to the generation of a proton gradient across the mitochondrial membrane that is then used for ATP synthesis. This Drosophila simulans (Fruit fly) protein is Cytochrome b (mt:Cyt-b).